The sequence spans 408 residues: Retron Ec48 reverse transcriptase (408 aa).

In terms of domain architecture, Reverse transcriptase spans 43 to 269; sequence EELKAIAELP…EPIKVHGLRV (227 aa). 3 residues coordinate Mg(2+): aspartate 137, aspartate 216, and aspartate 217.

This sequence belongs to the bacterial reverse transcriptase family.

The enzyme catalyses DNA(n) + a 2'-deoxyribonucleoside 5'-triphosphate = DNA(n+1) + diphosphate. Functionally, reverse transcriptase (RT) component of antiviral defense system retron Ec48, composed of a non-coding RNA (ncRNA), this reverse transcriptase (RT) and the following membrane protein. Expression of this retron confers protection against bacteriophages lambda, T2, T4, T5 and T7. At multiplicity of infection (MOI) of 0.02 cultures grow normally when infected with lambda without collapsing, at MOI 2 cultures enter growth stasis. At MOI 3 cell membranes are permeabilized within 15 minutes of infection but do not lyse, suggesting the phage are not able to finish a replication cycle. Antiviral defense is suppressed by mutations that knockout the lambda gam expression or phage T7 gp5.9 expression; both viral genes inhibit host RecBCD. The Ec48 retron may sense the integrity of the RecBCD enzyme; when RecBCD is perturbed by viral proteins the Ec48 effector (the membrane protein) is activated, leading to abortive infection and bacterial growth arrest. Responsible for synthesis of msDNA-Ec48 (a branched molecule with RNA linked by a 2',5'-phosphodiester bond to ssDNA). The retron transcript serves as primer (from a conserved internal G residue) and template for the reaction, and codes for the RT. The chain is Retron Ec48 reverse transcriptase from Escherichia coli.